Reading from the N-terminus, the 153-residue chain is Aspartate carbamoyltransferase regulatory chain (153 aa).

Zn(2+) contacts are provided by C109, C114, C138, and C141.

Belongs to the PyrI family. In terms of assembly, contains catalytic and regulatory chains. It depends on Zn(2+) as a cofactor.

Functionally, involved in allosteric regulation of aspartate carbamoyltransferase. This chain is Aspartate carbamoyltransferase regulatory chain, found in Shigella flexneri serotype 5b (strain 8401).